The following is a 596-amino-acid chain: V-type ATP synthase alpha chain (596 aa).

233–240 (GPFGAGKT) contributes to the ATP binding site.

Belongs to the ATPase alpha/beta chains family.

The catalysed reaction is ATP + H2O + 4 H(+)(in) = ADP + phosphate + 5 H(+)(out). Functionally, produces ATP from ADP in the presence of a proton gradient across the membrane. The V-type alpha chain is a catalytic subunit. The chain is V-type ATP synthase alpha chain from Streptococcus sanguinis (strain SK36).